The sequence spans 325 residues: Hydroxylase/desaturase poxK (325 aa).

The segment covering 1–12 (MTATATPVPTVA) has biased composition (low complexity). The disordered stretch occupies residues 1-25 (MTATATPVPTVASHAQDITLPPPPK).

The protein belongs to the asaB hydroxylase/desaturase family.

It participates in secondary metabolite biosynthesis. In terms of biological role, hydroxylase/desaturase; part of the gene cluster that mediates the biosynthesis of oxaleimides, cytotoxic compounds containing an unusual disubstituted succinimide moiety. The first step of the pathway is provided by the HR-PKS poxF that serves in a new mode of collaborative biosynthesis with the PKS-NRPS poxE, by providing the olefin containing amino acid substrate via the synthesis of an ACP-bound dec-4-enoate. The cytochrome P450 monooxygenase poxM-catalyzed oxidation at the alpha-position creates the enzyme-bound 2-hydroxydec-4-enoyl-ACP thioester, which may be prone to spontaneous hydrolysis to yield 2-hydroxydec-4-enoic acid due to increased electrophilicity of the carbonyl. 2-hydroxydec-4-enoic acid can then be further oxidized by poxM to yield the alpha-ketoacid 2-oxodec-4-enoicacid, which is reductively aminated by the aminotransferase poxL to yield (S,E)-2-aminodec-4-enoic acid. The Hybrid PKS-NRPS synthetase poxE then performs condensation between the octaketide product of its PKS modules and the amino group of (S,E)-2-aminodec-4-enoic acid which is activated and incorporated by the adenylation domain. The resulting aminoacyl product can be cyclized by the Diels-Alderase PoxQ and reductively released by the reductive (R) domain of poxE to yield an aldehyde intermediate. The released aldehyde is then substrate for a Knoevenagel condensation by the hydrolyase poxO followed by an oxidation at the 5-position of the pyrrolidone ring. The presence of the olefin from the amino acid building block allows for migration of the substituted allyl group to occur. This allylic transposition reaction takes place in a conjugate addition, semipinacol-like fashion to yield a succinimide intermediate. Iterative two-electron oxidations of the C7 methyl of the succinimide intermediate to the carboxylic acid can be catalyzed by one of two remaining cytochrome P450 monooxygenasess poxC or poxD to yield oxaleimide A. Subsequent oxidation yields the maleimide scaffold oxaleimide I. Both oxaleimide A and oxaleimide I can undergo oxidative modifications in the decalin ring to yield the series of products oxaleimides B to H. The protein is Hydroxylase/desaturase poxK of Penicillium oxalicum.